We begin with the raw amino-acid sequence, 959 residues long: Probable serine/threonine-protein kinase DDB_G0291664 (959 aa).

The segment at 154-213 is disordered; the sequence is QQQQQQQLTPPPSPPLLPIPQPPAQNEEQQLTQPPSIPPPQQKQIKIQKSDRGTQVKSIT. Over residues 162–176 the composition is skewed to pro residues; sequence TPPPSPPLLPIPQPP. 2 ANK repeats span residues 294–324 and 333–362; these read KGET…CMGI and LNKN…PLKM. A Protein kinase domain is found at 482–762; the sequence is IDFHTQIGSA…EVGIIETEFL (281 aa). ATP is bound by residues 488 to 496 and Lys-509; that span reads IGSAGNASV. Asp-610 functions as the Proton acceptor in the catalytic mechanism. A disordered region spans residues 904-959; the sequence is NNINNNNNNNNNCNNSKKFKTTSESTSALGSDASSSSSPSSSSPSPKYSASIYHHQ.

This sequence belongs to the protein kinase superfamily. Ser/Thr protein kinase family.

It carries out the reaction L-seryl-[protein] + ATP = O-phospho-L-seryl-[protein] + ADP + H(+). It catalyses the reaction L-threonyl-[protein] + ATP = O-phospho-L-threonyl-[protein] + ADP + H(+). This chain is Probable serine/threonine-protein kinase DDB_G0291664, found in Dictyostelium discoideum (Social amoeba).